The following is a 570-amino-acid chain: Sulfite reductase [NADPH] hemoprotein beta-component (570 aa).

C434, C440, C479, and C483 together coordinate [4Fe-4S] cluster. Siroheme is bound at residue C483.

This sequence belongs to the nitrite and sulfite reductase 4Fe-4S domain family. Alpha(8)-beta(8). The alpha component is a flavoprotein, the beta component is a hemoprotein. Siroheme is required as a cofactor. [4Fe-4S] cluster serves as cofactor.

The catalysed reaction is hydrogen sulfide + 3 NADP(+) + 3 H2O = sulfite + 3 NADPH + 4 H(+). Its pathway is sulfur metabolism; hydrogen sulfide biosynthesis; hydrogen sulfide from sulfite (NADPH route): step 1/1. Functionally, component of the sulfite reductase complex that catalyzes the 6-electron reduction of sulfite to sulfide. This is one of several activities required for the biosynthesis of L-cysteine from sulfate. The polypeptide is Sulfite reductase [NADPH] hemoprotein beta-component (Enterobacter sp. (strain 638)).